Consider the following 340-residue polypeptide: Ubiquitin-like domain-containing CTD phosphatase (340 aa).

In terms of domain architecture, Ubiquitin-like spans Leu-24 to Asp-101. In terms of domain architecture, FCP1 homology spans Cys-151–Ile-312. The interval Cys-151 to Ile-312 is phosphatase. 3 residues coordinate Mg(2+): Asp-161, Asp-163, and Asp-271.

The cofactor is Mg(2+).

It localises to the nucleus. The catalysed reaction is O-phospho-L-seryl-[protein] + H2O = L-seryl-[protein] + phosphate. It carries out the reaction O-phospho-L-threonyl-[protein] + H2O = L-threonyl-[protein] + phosphate. Its function is as follows. Dephosphorylates 26S nuclear proteasomes, thereby decreasing their proteolytic activity. The dephosphorylation may prevent assembly of the core and regulatory particles (CP and RP) into mature 26S proteasome. The chain is Ubiquitin-like domain-containing CTD phosphatase from Arabidopsis thaliana (Mouse-ear cress).